Here is a 212-residue protein sequence, read N- to C-terminus: Placenta-specific protein 1 (212 aa).

An N-terminal signal peptide occupies residues 1-22; sequence MKVFKFIGLMILLTSAFSAGSG.

The protein belongs to the PLAC1 family. Expressed in placenta. Localizes primarily to differentiated syncytiotrophoblast throughout gestation as well as to a small population of villous cytotrophoblasts. Also detected in maternal blood and rapidly disappears following delivery, but is not detected in other adult or fetal tissues examined.

It is found in the secreted. In terms of biological role, may play a role in placental development. The protein is Placenta-specific protein 1 of Homo sapiens (Human).